The following is a 447-amino-acid chain: N-succinylarginine dihydrolase (447 aa).

Substrate is bound by residues 19–28 (AGLSFGNEAS), Asn110, and 137–138 (HR). Glu174 is an active-site residue. Residue Arg212 participates in substrate binding. Residue His248 is part of the active site. Residues Asp250 and Asn359 each coordinate substrate. The active-site Nucleophile is Cys365.

The protein belongs to the succinylarginine dihydrolase family. As to quaternary structure, homodimer.

The enzyme catalyses N(2)-succinyl-L-arginine + 2 H2O + 2 H(+) = N(2)-succinyl-L-ornithine + 2 NH4(+) + CO2. It participates in amino-acid degradation; L-arginine degradation via AST pathway; L-glutamate and succinate from L-arginine: step 2/5. In terms of biological role, catalyzes the hydrolysis of N(2)-succinylarginine into N(2)-succinylornithine, ammonia and CO(2). The chain is N-succinylarginine dihydrolase from Escherichia coli (strain K12 / MC4100 / BW2952).